A 526-amino-acid polypeptide reads, in one-letter code: MLO-like protein 1 (526 aa).

Residues 1 to 11 are Extracellular-facing; sequence MGHGGEGMSLE. A helical membrane pass occupies residues 12 to 32; sequence FTPTWVVAGVCTVIVAISLAV. Residues 33–61 are Cytoplasmic-facing; sequence ERLLHYFGTVLKKKKQKPLYEALQKVKEE. Residues 62 to 82 form a helical membrane-spanning segment; sequence LMLLGFISLLLTVFQGLISKF. Residues 83–160 lie on the Extracellular side of the membrane; sequence CVKENVLMHM…LSLEALHHLH (78 aa). Residues 161 to 181 traverse the membrane as a helical segment; sequence IFIFVLAISHVTFCVLTVIFG. Residues 182–287 lie on the Cytoplasmic side of the membrane; the sequence is STRIHQWKKW…MRALEDDFKQ (106 aa). 2 consecutive transmembrane segments (helical) span residues 288–308 and 309–329; these read VVGISWYLWIFVVIFLLLNVN and GWHTYFWIAFIPFALLLAVGT. Over 330 to 372 the chain is Cytoplasmic; it reads KLEHVIAQLAHEVAEKHVAIEGDLVVKPSDEHFWFSKPQIVLY. The chain crosses the membrane as a helical span at residues 373–393; it reads LIHFILFQNAFEIAFFFWIWV. At 394–412 the chain is on the extracellular side; that stretch reads TYGFDSCIMGQVRYIVPRL. The helical transmembrane segment at 413-433 threads the bilayer; that stretch reads VIGVFIQVLCSYSTLPLYAIV. At 434–526 the chain is on the cytoplasmic side; that stretch reads SQMGSSFKKA…NNEITPDHNN (93 aa). A calmodulin-binding region spans residues 447–468; it reads ENVQVGLVGWAQKVKQKRDLKA. The disordered stretch occupies residues 471-526; that stretch reads SNGDEGSSQAGPGPDSGSGSAPAAGPGAGFAGIQLSRVTRNNAGDTNNEITPDHNN. Residues 476 to 495 show a composition bias toward low complexity; it reads GSSQAGPGPDSGSGSAPAAG. Residues 506–520 show a composition bias toward polar residues; sequence SRVTRNNAGDTNNEI.

Belongs to the MLO family.

Its subcellular location is the cell membrane. Its function is as follows. May be involved in modulation of pathogen defense and leaf cell death. Activity seems to be regulated by Ca(2+)-dependent calmodulin binding and seems not to require heterotrimeric G proteins. This is MLO-like protein 1 (MLO1) from Arabidopsis thaliana (Mouse-ear cress).